We begin with the raw amino-acid sequence, 448 residues long: Exodeoxyribonuclease 7 large subunit (448 aa).

Belongs to the XseA family. In terms of assembly, heterooligomer composed of large and small subunits.

It localises to the cytoplasm. The catalysed reaction is Exonucleolytic cleavage in either 5'- to 3'- or 3'- to 5'-direction to yield nucleoside 5'-phosphates.. Bidirectionally degrades single-stranded DNA into large acid-insoluble oligonucleotides, which are then degraded further into small acid-soluble oligonucleotides. In Geobacillus kaustophilus (strain HTA426), this protein is Exodeoxyribonuclease 7 large subunit.